Reading from the N-terminus, the 514-residue chain is Maturase K (514 aa).

Belongs to the intron maturase 2 family. MatK subfamily.

It is found in the plastid. The protein resides in the chloroplast. Its function is as follows. Usually encoded in the trnK tRNA gene intron. Probably assists in splicing its own and other chloroplast group II introns. The protein is Maturase K of Acer monspessulanum (Montpellier maple).